Reading from the N-terminus, the 319-residue chain is Ribosomal RNA small subunit methyltransferase H (319 aa).

S-adenosyl-L-methionine is bound by residues 39–41 (GGH), Asp59, Phe83, Asp104, and Gln111.

This sequence belongs to the methyltransferase superfamily. RsmH family.

It localises to the cytoplasm. The enzyme catalyses cytidine(1402) in 16S rRNA + S-adenosyl-L-methionine = N(4)-methylcytidine(1402) in 16S rRNA + S-adenosyl-L-homocysteine + H(+). Functionally, specifically methylates the N4 position of cytidine in position 1402 (C1402) of 16S rRNA. This chain is Ribosomal RNA small subunit methyltransferase H, found in Ralstonia nicotianae (strain ATCC BAA-1114 / GMI1000) (Ralstonia solanacearum).